A 152-amino-acid chain; its full sequence is Inner membrane protein YbbJ (152 aa).

A helical transmembrane segment spans residues 1–21 (MMELMVVHPHIFWLSLGGLLL). Residues 22–31 (AAEMLGGNGY) lie on the Cytoplasmic side of the membrane. Residues 32-52 (LLWSGVAAVITGLVVWLVPLG) traverse the membrane as a helical segment. Residues 53-54 (WE) lie on the Periplasmic side of the membrane. Residues 55–75 (WQGVMFAILTLLAAWLWWKWL) form a helical membrane-spanning segment. Over 76–152 (SRRVREQKHS…ITLHIRAVSS (77 aa)) the chain is Cytoplasmic.

To M.jannaschii MJ0826.

The protein resides in the cell inner membrane. This chain is Inner membrane protein YbbJ (ybbJ), found in Escherichia coli (strain K12).